We begin with the raw amino-acid sequence, 360 residues long: Peptide chain release factor 1 (360 aa).

An N5-methylglutamine modification is found at Gln-235. Positions 285–313 (KRQQAEASTRRNLLGSGDRSDRNRTYNFP) are disordered.

Belongs to the prokaryotic/mitochondrial release factor family. Methylated by PrmC. Methylation increases the termination efficiency of RF1.

The protein resides in the cytoplasm. Its function is as follows. Peptide chain release factor 1 directs the termination of translation in response to the peptide chain termination codons UAG and UAA. The polypeptide is Peptide chain release factor 1 (Enterobacter sp. (strain 638)).